The following is a 215-amino-acid chain: Protein HP-25 homolog 2 (215 aa).

An N-terminal signal peptide occupies residues 1–30 (MPGRGGQSLSMVCVDVWILALSVLSVMADA). Residues 35–79 (VTESCDSQGPPGLPGPPGLPGPPGPPGPPGPPGLRGPTGIPGDIE) form a disordered region. One can recognise a Collagen-like domain in the interval 43-76 (GPPGLPGPPGLPGPPGPPGPPGPPGLRGPTGIPG). The span at 45–68 (PGLPGPPGLPGPPGPPGPPGPPGL) shows a compositional bias: pro residues. Residues 82 to 215 (LSPPKSAFAV…GYLLYGNYPG (134 aa)) enclose the C1q domain.

The protein resides in the secreted. The chain is Protein HP-25 homolog 2 from Bos taurus (Bovine).